The following is a 371-amino-acid chain: UDP-N-acetylglucosamine--N-acetylmuramyl-(pentapeptide) pyrophosphoryl-undecaprenol N-acetylglucosamine transferase (371 aa).

UDP-N-acetyl-alpha-D-glucosamine is bound by residues 15-17 (TGG), Asn126, Arg172, Ser199, Ile256, 275-280 (ALTVSE), and Gln301.

It belongs to the glycosyltransferase 28 family. MurG subfamily.

The protein resides in the cell inner membrane. It carries out the reaction di-trans,octa-cis-undecaprenyl diphospho-N-acetyl-alpha-D-muramoyl-L-alanyl-D-glutamyl-meso-2,6-diaminopimeloyl-D-alanyl-D-alanine + UDP-N-acetyl-alpha-D-glucosamine = di-trans,octa-cis-undecaprenyl diphospho-[N-acetyl-alpha-D-glucosaminyl-(1-&gt;4)]-N-acetyl-alpha-D-muramoyl-L-alanyl-D-glutamyl-meso-2,6-diaminopimeloyl-D-alanyl-D-alanine + UDP + H(+). Its pathway is cell wall biogenesis; peptidoglycan biosynthesis. Its function is as follows. Cell wall formation. Catalyzes the transfer of a GlcNAc subunit on undecaprenyl-pyrophosphoryl-MurNAc-pentapeptide (lipid intermediate I) to form undecaprenyl-pyrophosphoryl-MurNAc-(pentapeptide)GlcNAc (lipid intermediate II). The chain is UDP-N-acetylglucosamine--N-acetylmuramyl-(pentapeptide) pyrophosphoryl-undecaprenol N-acetylglucosamine transferase from Francisella tularensis subsp. tularensis (strain WY96-3418).